We begin with the raw amino-acid sequence, 428 residues long: Tubby-like F-box protein 5 (428 aa).

The interval 17 to 65 (IGSMSRRAADGRAGGGRGGSRHSWPVLWSEQQQPPQQQQLQRQEHQQQQ) is disordered. Over residues 47–65 (QQQPPQQQQLQRQEHQQQQ) the composition is skewed to low complexity. Residues 65-117 (QGRWANLPPELLLDVIQRVEASEATWPARRQVVACAAVCRSWREVTKEVVKTL) enclose the F-box domain.

Belongs to the TUB family. Ubiquitous.

The polypeptide is Tubby-like F-box protein 5 (TULP5) (Oryza sativa subsp. japonica (Rice)).